A 468-amino-acid chain; its full sequence is Glutamate--tRNA ligase (468 aa).

The short motif at Pro8 to Gly18 is the 'HIGH' region element. Residues Cys97, Cys99, Cys124, and Asp126 each coordinate Zn(2+). Residues Lys236–Arg240 carry the 'KMSKS' region motif. Lys239 lines the ATP pocket.

It belongs to the class-I aminoacyl-tRNA synthetase family. Glutamate--tRNA ligase type 1 subfamily. In terms of assembly, monomer. Requires Zn(2+) as cofactor.

The protein localises to the cytoplasm. It catalyses the reaction tRNA(Glu) + L-glutamate + ATP = L-glutamyl-tRNA(Glu) + AMP + diphosphate. In terms of biological role, catalyzes the attachment of glutamate to tRNA(Glu) in a two-step reaction: glutamate is first activated by ATP to form Glu-AMP and then transferred to the acceptor end of tRNA(Glu). In Francisella tularensis subsp. mediasiatica (strain FSC147), this protein is Glutamate--tRNA ligase.